The sequence spans 604 residues: Siderophore iron transporter mirB (604 aa).

Residues 1-61 (MTIGSKFSLL…DNSSDEALPS (61 aa)) are disordered. The next 14 helical transmembrane spans lie at 73-95 (AVTLVWSKWSLVAVFCLLWLVTL), 115-137 (FQSHSLLTVINIVSSAMVSALYI), 149-168 (AEGWLVMVGLSTLGLIMMAA), 178-200 (ADVFYSVGFAGMNYILCVLAADI), 207-224 (GIAFAFTSSPYMITAFAG), 237-259 (WRWGFGAFAIIFPFVASPVYFVL), 289-311 (YFFAFDIPGVILLAGGLTVFLLP), 326-343 (YIIAMIVTGFVVMVLFVL), 363-385 (TVLGACLIDATYQMSYYCWNSYF), 400-422 (AGYVGSTFQVVSGVLLFMVGFAI), 427-449 (YFRWLLFIGVPLYIFAQGLMIHF), 454-476 (QYIGYIVMCEIFISIGGSIFVLL), 489-511 (YVAAALAVLFISGGIGGAVGNAI), and 566-588 (AQARMLAAGTGLMALMFIWMFMV).

Belongs to the major facilitator superfamily.

Its subcellular location is the membrane. In terms of biological role, involved in the transport of siderophore triacestylfusarinine C and so has a role in iron homeostasis. This chain is Siderophore iron transporter mirB (mirB), found in Emericella nidulans (strain FGSC A4 / ATCC 38163 / CBS 112.46 / NRRL 194 / M139) (Aspergillus nidulans).